The sequence spans 184 residues: Ribosome-recycling factor (184 aa).

Belongs to the RRF family.

It localises to the cytoplasm. Functionally, responsible for the release of ribosomes from messenger RNA at the termination of protein biosynthesis. May increase the efficiency of translation by recycling ribosomes from one round of translation to another. This chain is Ribosome-recycling factor, found in Borreliella afzelii (strain PKo) (Borrelia afzelii).